A 1202-amino-acid polypeptide reads, in one-letter code: PAN2-PAN3 deadenylation complex catalytic subunit PAN2 (1202 aa).

WD repeat units lie at residues 153 to 193 (DENE…QKYA), 195 to 231 (ETPG…VEHE), 244 to 280 (VHGN…AITP), and 328 to 367 (PVGP…SFNP). The interval 368 to 485 (YSRETEFALP…VGREEEPHLH (118 aa)) is linker. A USP domain is found at 486–924 (MVSKKYRKVT…VPAILYYVKR (439 aa)). The residue at position 791 (S791) is a Phosphoserine. One can recognise an Exonuclease domain in the interval 975 to 1147 (VGLDAEFVTL…EDARTALQLY (173 aa)). D978, E980, D1087, and D1139 together coordinate a divalent metal cation. Residue S1189 is modified to Phosphoserine.

It belongs to the peptidase C19 family. PAN2 subfamily. In terms of assembly, forms a heterotrimer with an asymmetric homodimer of the regulatory subunit PAN3 to form the poly(A)-nuclease (PAN) deadenylation complex. Interacts with PAN3 isoform 1/Pan3L and isoform 3/Pan3S. Interacts with ZFP36. The cofactor is a divalent metal cation.

The protein localises to the cytoplasm. It localises to the P-body. Its subcellular location is the nucleus. The enzyme catalyses Exonucleolytic cleavage of poly(A) to 5'-AMP.. Its activity is regulated as follows. Positively regulated by the regulatory subunit PAN3. In terms of biological role, catalytic subunit of the poly(A)-nuclease (PAN) deadenylation complex, one of two cytoplasmic mRNA deadenylases involved in general and miRNA-mediated mRNA turnover. PAN specifically shortens poly(A) tails of RNA and the activity is stimulated by poly(A)-binding protein (PABP). PAN deadenylation is followed by rapid degradation of the shortened mRNA tails by the CCR4-NOT complex. Deadenylated mRNAs are then degraded by two alternative mechanisms, namely exosome-mediated 3'-5' exonucleolytic degradation, or deadenylation-dependent mRNA decaping and subsequent 5'-3' exonucleolytic degradation by XRN1. Also acts as an important regulator of the HIF1A-mediated hypoxic response. Required for HIF1A mRNA stability independent of poly(A) tail length regulation. This Homo sapiens (Human) protein is PAN2-PAN3 deadenylation complex catalytic subunit PAN2.